The following is a 397-amino-acid chain: Elongation factor Tu (397 aa).

Positions 10–206 constitute a tr-type G domain; that stretch reads KPHCNIGTIG…TIDEYVPDPE (197 aa). Residues 19–26 are G1; that stretch reads GHVDHGKT. GTP is bound at residue 19–26; it reads GHVDHGKT. Residue Thr26 coordinates Mg(2+). The tract at residues 61–65 is G2; it reads GITIS. The interval 82–85 is G3; the sequence is DCPG. GTP-binding positions include 82–86 and 137–140; these read DCPGH and NKCD. Residues 137 to 140 form a G4 region; it reads NKCD. Residues 175–177 form a G5 region; it reads SAL.

Belongs to the TRAFAC class translation factor GTPase superfamily. Classic translation factor GTPase family. EF-Tu/EF-1A subfamily. Monomer.

The protein localises to the cytoplasm. The catalysed reaction is GTP + H2O = GDP + phosphate + H(+). GTP hydrolase that promotes the GTP-dependent binding of aminoacyl-tRNA to the A-site of ribosomes during protein biosynthesis. The protein is Elongation factor Tu of Lachnospira eligens (strain ATCC 27750 / DSM 3376 / VPI C15-48 / C15-B4) (Eubacterium eligens).